A 762-amino-acid chain; its full sequence is uncharacterized protein (762 aa).

The disordered stretch occupies residues 734–762 (QQRPRVAAAAPPPPPQPPAAAVPTTQAST). A compositionally biased stretch (pro residues) spans 743 to 753 (APPPPPQPPAA).

This is an uncharacterized protein from Ostreid herpesvirus 1 (isolate France) (OsHV-1).